The primary structure comprises 264 residues: Small ribosomal subunit protein eS1 (264 aa).

N6-acetyllysine; alternate is present on Lys34. Residue Lys34 forms a Glycyl lysine isopeptide (Lys-Gly) (interchain with G-Cter in SUMO2); alternate linkage. Lys56 is subject to N6-acetyllysine. Tyr155 carries the ADP-ribosyltyrosine modification. The segment at 232-264 (HGEGSSSGKATGDETGAKVERADGYEPPVQESV) is disordered. A phosphoserine mark is found at Ser236 and Ser237. A compositionally biased stretch (basic and acidic residues) spans 242–255 (TGDETGAKVERADG). Residue Lys249 is modified to N6-acetyllysine; alternate. Lys249 is covalently cross-linked (Glycyl lysine isopeptide (Lys-Gly) (interchain with G-Cter in SUMO2); alternate). Position 256 is a phosphotyrosine (Tyr256). A Phosphoserine modification is found at Ser263.

This sequence belongs to the eukaryotic ribosomal protein eS1 family. As to quaternary structure, component of the small ribosomal subunit. Mature ribosomes consist of a small (40S) and a large (60S) subunit. The 40S subunit contains about 33 different proteins and 1 molecule of RNA (18S). The 60S subunit contains about 49 different proteins and 3 molecules of RNA (28S, 5.8S and 5S). Identified in a IGF2BP1-dependent mRNP granule complex containing untranslated mRNAs. Binds with high affinity to IPO4. Interacts with DDIT3. Part of the small subunit (SSU) processome, composed of more than 70 proteins and the RNA chaperone small nucleolar RNA (snoRNA) U3. In terms of processing, ADP-ribosylated at Tyr-155 by PARP1 in presence of HPF1.

The protein localises to the cytoplasm. Its subcellular location is the nucleus. The protein resides in the nucleolus. Functionally, component of the small ribosomal subunit. The ribosome is a large ribonucleoprotein complex responsible for the synthesis of proteins in the cell. Part of the small subunit (SSU) processome, first precursor of the small eukaryotic ribosomal subunit. During the assembly of the SSU processome in the nucleolus, many ribosome biogenesis factors, an RNA chaperone and ribosomal proteins associate with the nascent pre-rRNA and work in concert to generate RNA folding, modifications, rearrangements and cleavage as well as targeted degradation of pre-ribosomal RNA by the RNA exosome. May play a role during erythropoiesis through regulation of transcription factor DDIT3. This Macaca fascicularis (Crab-eating macaque) protein is Small ribosomal subunit protein eS1.